A 293-amino-acid chain; its full sequence is Nucleotide-binding protein BCQ_4976 (293 aa).

14 to 21 (GMSGAGKT) is a binding site for ATP. A GTP-binding site is contributed by 65-68 (DLRG).

It belongs to the RapZ-like family.

Its function is as follows. Displays ATPase and GTPase activities. The chain is Nucleotide-binding protein BCQ_4976 from Bacillus cereus (strain Q1).